The following is a 236-amino-acid chain: Sugar fermentation stimulation protein homolog (236 aa).

The protein belongs to the SfsA family.

This Methylobacterium nodulans (strain LMG 21967 / CNCM I-2342 / ORS 2060) protein is Sugar fermentation stimulation protein homolog.